We begin with the raw amino-acid sequence, 60 residues long: Large ribosomal subunit protein uL30 (60 aa).

It belongs to the universal ribosomal protein uL30 family. In terms of assembly, part of the 50S ribosomal subunit.

The chain is Large ribosomal subunit protein uL30 from Agathobacter rectalis (strain ATCC 33656 / DSM 3377 / JCM 17463 / KCTC 5835 / VPI 0990) (Eubacterium rectale).